A 392-amino-acid chain; its full sequence is Heat-inducible transcription repressor HrcA (392 aa).

The protein belongs to the HrcA family.

In terms of biological role, negative regulator of class I heat shock genes (grpE-dnaK-dnaJ and groELS operons). Prevents heat-shock induction of these operons. In Chlamydia muridarum (strain MoPn / Nigg), this protein is Heat-inducible transcription repressor HrcA.